Reading from the N-terminus, the 509-residue chain is Cardiolipin synthase 1 (509 aa).

The next 3 membrane-spanning stretches (helical) occupy residues 4–24, 30–50, and 59–79; these read PIIQLLLIFTIVSIVPFLLNT, YTFVGVLWSITIVGISFVIFI, and LAWFLVLALLPVVGVLLYSIF. PLD phosphodiesterase domains follow at residues 238-265 and 422-449; these read VNYRNHRKIVIVDGEIGFTGGLNVGDEY and KDGFMHAKILLVDDKIATIGTANMDVRS. Residues His243, Lys245, Asp250, His427, Lys429, and Asp434 contribute to the active site.

The protein belongs to the phospholipase D family. Cardiolipin synthase subfamily.

Its subcellular location is the cell membrane. The catalysed reaction is 2 a 1,2-diacyl-sn-glycero-3-phospho-(1'-sn-glycerol) = a cardiolipin + glycerol. Functionally, catalyzes the reversible phosphatidyl group transfer from one phosphatidylglycerol molecule to another to form cardiolipin (CL) (diphosphatidylglycerol) and glycerol. In Bacillus anthracis, this protein is Cardiolipin synthase 1 (cls1).